Here is a 309-residue protein sequence, read N- to C-terminus: Mitochondrial import receptor subunit TOM34 (309 aa).

The residue at position 8 (serine 8) is a Phosphoserine. TPR repeat units follow at residues 9–42 (VEQL…LQAR), 51–84 (SVLY…VPFS), and 86–118 (KPLL…DNSV). The segment at 158–187 (WSSLPSENHKETAKSKSKETTATKNRVPSA) is disordered. Serine 160 is subject to Phosphoserine. A compositionally biased stretch (basic and acidic residues) spans 164-178 (ENHKETAKSKSKETT). Serine 186 is modified (phosphoserine). 3 TPR repeats span residues 193-226 (ARVL…SSLE), 227-260 (SATY…DGKN), and 262-294 (KAFY…EPRN). Residue lysine 197 forms a Glycyl lysine isopeptide (Lys-Gly) (interchain with G-Cter in SUMO2) linkage.

Belongs to the Tom34 family. As to quaternary structure, interacts with HSP90A, VCP, ATP6V1D, KIAA0665, AMPK, and DMAP1 through its TPR repeat.

Its subcellular location is the cytoplasm. The protein localises to the mitochondrion outer membrane. Plays a role in the import of cytosolically synthesized preproteins into mitochondria. Binds the mature portion of precursor proteins. Interacts with cellular components, and possesses weak ATPase activity. May be a chaperone-like protein that helps to keep newly synthesized precursors in an unfolded import compatible state. In Rattus norvegicus (Rat), this protein is Mitochondrial import receptor subunit TOM34 (Tomm34).